A 281-amino-acid chain; its full sequence is MTSFLHAYFTRLHCQPLGVPTVEALRTLHLAHNCAIPFENLDVLLPREIQLDETALEEKLLYARRGGYCFELNGLFERALRDIGFNVRSLLGRVILSHPASLPPRTHRLLLVDVEDEQWIADVGFGGQTLTAPLRLQAEIAQQTPHGEYRLMQEGSTWILQFRHHEHWQSMYCFDLGVQQQSDHVMGNFWSAHWPQSHFRHHLLMCRHLPDGGKLTLTNFHFTRYHQGHAVEQVNVPDVPSLYQLLQQQFGLGVNDVKHGFTEAELAAVMAAFDTHPEAGK.

Catalysis depends on C69, which acts as the Acyl-thioester intermediate. Active-site residues include H107 and D122.

This sequence belongs to the arylamine N-acetyltransferase family. Monomer and homodimer.

The protein resides in the cytoplasm. It catalyses the reaction an arylamine + acetyl-CoA = an N-acetylarylamine + CoA. The enzyme catalyses an N-hydroxyarylamine + acetyl-CoA = an N-acetoxyarylamine + CoA. With respect to regulation, inhibited by N-ethylmaleimide and iodoacetamide. Its function is as follows. Catalyzes both the acetyl-CoA-dependent N-acetylation of aromatic amines and the O-acetylation of N-hydroxyarylamines. In vitro, catalyzes the O-acetylation of N-hydroxy-Glu-P-1, and the N-acetylation of isoniazid and 2-aminofluorene. The polypeptide is Arylamine N-acetyltransferase / N-hydroxyarylamine O-acetyltransferase (nhoA) (Salmonella typhimurium (strain LT2 / SGSC1412 / ATCC 700720)).